Reading from the N-terminus, the 215-residue chain is UPF0173 metal-dependent hydrolase NEQ378 (215 aa).

Belongs to the UPF0173 family.

In Nanoarchaeum equitans (strain Kin4-M), this protein is UPF0173 metal-dependent hydrolase NEQ378.